Here is a 267-residue protein sequence, read N- to C-terminus: uncharacterized protein (267 aa).

A WD repeat occupies 50 to 90 (PGLNAVTASKFSPDGRWLLNIADGSGYVQLWDTAKGERVKT).

This is an uncharacterized protein from Deinococcus radiodurans (strain ATCC 13939 / DSM 20539 / JCM 16871 / CCUG 27074 / LMG 4051 / NBRC 15346 / NCIMB 9279 / VKM B-1422 / R1).